We begin with the raw amino-acid sequence, 830 residues long: Heavy metal tolerance protein (830 aa).

The N-terminal stretch at 1–27 (MVLRYNSPRLNILELVLLYVGFFSIGS) is a signal peptide. 3 helical membrane-spanning segments follow: residues 51–71 (PIGIISWWILGIALTYVVDIS), 88–108 (TTVVCLILFLLFWIIVLISCA), and 126–146 (LSVLYVWAIDIVFETIFIVYS). The N-linked (GlcNAc...) asparagine glycan is linked to Asn-150. 3 consecutive transmembrane segments (helical) span residues 156–176 (IVLADHVARLVLCVFATAIYL), 263–283 (FQIFICIVLLFLGRAVNILAP), and 304–324 (DVILFVIYRFLQGNMGVIGSL). Positions 265-550 (IFICIVLLFL…FGTLYRSLQN (286 aa)) constitute an ABC transmembrane type-1 domain. A glycan (N-linked (GlcNAc...) asparagine) is linked at Asn-350. The next 2 helical transmembrane spans lie at 381-401 (VVFQIGPVLLDLGVAMVYFFI) and 403-423 (FDIYFTLIVLIMTLCYCYVTV). Glutathione contacts are provided by residues 429–433 (RTEAR), 492–495 (NIVQ), and Gly-542. A helical transmembrane segment spans residues 490–511 (FLNIVQGGIFTFSLAIACLLSA). Positions 584-818 (VIFSHVSFAY…DGGAYKKMWF (235 aa)) constitute an ABC transporter domain. ATP contacts are provided by residues Tyr-593 and 617 to 628 (GESGGGKSTIMR).

Belongs to the ABC transporter superfamily. ABCB family. Heavy Metal importer (TC 3.A.1.210) subfamily.

It localises to the vacuole membrane. In terms of biological role, involved in metal tolerance. Probably involved in the transport of metal-bound phytochelatins. Compartmentalizes cadmium within vacuoles, thereby protecting cells from cadmium toxicity. The chain is Heavy metal tolerance protein (hmt1) from Schizosaccharomyces pombe (strain 972 / ATCC 24843) (Fission yeast).